Consider the following 101-residue polypeptide: Small ribosomal subunit protein uS14 (101 aa).

Belongs to the universal ribosomal protein uS14 family. Part of the 30S ribosomal subunit. Contacts proteins S3 and S10.

Functionally, binds 16S rRNA, required for the assembly of 30S particles and may also be responsible for determining the conformation of the 16S rRNA at the A site. The protein is Small ribosomal subunit protein uS14 of Bordetella petrii (strain ATCC BAA-461 / DSM 12804 / CCUG 43448).